A 299-amino-acid polypeptide reads, in one-letter code: 33 kDa chaperonin (299 aa).

2 disulfides stabilise this stretch: cysteine 234/cysteine 236 and cysteine 268/cysteine 271.

This sequence belongs to the HSP33 family. Post-translationally, under oxidizing conditions two disulfide bonds are formed involving the reactive cysteines. Under reducing conditions zinc is bound to the reactive cysteines and the protein is inactive.

The protein localises to the cytoplasm. Its function is as follows. Redox regulated molecular chaperone. Protects both thermally unfolding and oxidatively damaged proteins from irreversible aggregation. Plays an important role in the bacterial defense system toward oxidative stress. This Pseudomonas putida (strain ATCC 47054 / DSM 6125 / CFBP 8728 / NCIMB 11950 / KT2440) protein is 33 kDa chaperonin.